A 139-amino-acid polypeptide reads, in one-letter code: Large ribosomal subunit protein uL16 (139 aa).

Residues 1–17 show a composition bias toward basic residues; that stretch reads MLQPKRTKYRKQQKGRM. Residues 1–25 are disordered; it reads MLQPKRTKYRKQQKGRMKGLSQRGH.

It belongs to the universal ribosomal protein uL16 family. Part of the 50S ribosomal subunit.

Its function is as follows. Binds 23S rRNA and is also seen to make contacts with the A and possibly P site tRNAs. The protein is Large ribosomal subunit protein uL16 of Christiangramia forsetii (strain DSM 17595 / CGMCC 1.15422 / KT0803) (Gramella forsetii).